Reading from the N-terminus, the 530-residue chain is Glutamate--cysteine ligase (530 aa).

The protein belongs to the glutamate--cysteine ligase type 1 family. Type 1 subfamily.

The enzyme catalyses L-cysteine + L-glutamate + ATP = gamma-L-glutamyl-L-cysteine + ADP + phosphate + H(+). Its pathway is sulfur metabolism; glutathione biosynthesis; glutathione from L-cysteine and L-glutamate: step 1/2. The protein is Glutamate--cysteine ligase of Saccharophagus degradans (strain 2-40 / ATCC 43961 / DSM 17024).